Consider the following 437-residue polypeptide: Bile acid CoA-transferase BaiK (437 aa).

Aspartate 171 serves as the catalytic Nucleophile.

Belongs to the CoA-transferase III family.

The catalysed reaction is deoxycholoyl-CoA + cholate = choloyl-CoA + deoxycholate. It carries out the reaction allodeoxycholoyl-CoA + cholate = allodeoxycholate + choloyl-CoA. The enzyme catalyses allocholate + deoxycholoyl-CoA = allocholoyl-CoA + deoxycholate. It catalyses the reaction allocholate + allodeoxycholoyl-CoA = allocholoyl-CoA + allodeoxycholate. The catalysed reaction is ursodeoxycholate + deoxycholoyl-CoA = ursodeoxycholoyl-CoA + deoxycholate. It carries out the reaction allodeoxycholoyl-CoA + ursodeoxycholate = ursodeoxycholoyl-CoA + allodeoxycholate. The protein operates within lipid metabolism; bile acid biosynthesis. Functionally, functions in the bile acid 7alpha-dehydroxylation pathway, which forms secondary bile acids via the 7alpha-dehydroxylation of primary bile acids, and is carried out by intestinal anaerobic bacteria. Acts as a bile acid CoA transferase with broad bile acid substrate specificity. Catalyzes the transfer of the CoA moiety of secondary bile acid-CoA compounds to primary bile acids. Can use deoxycholoyl-CoA and allodeoxycholoyl-CoA as bile acid CoA donors and cholate, allocholate and ursodeoxycholate as bile acid CoA acceptors. Shows no activity when lithocholoyl-CoA is used as the CoA donor. The protein is Bile acid CoA-transferase BaiK of Clostridium scindens (strain JCM 10418 / VPI 12708).